The chain runs to 255 residues: Kallikrein-4 (255 aa).

The N-terminal stretch at 1–25 (MMVTARTPWGWFLGCLILEVTGASA) is a signal peptide. Positions 26–31 (SSVSSR) are excised as a propeptide. Positions 32–253 (IIQGQDCSPH…FTNWIQTIIQ (222 aa)) constitute a Peptidase S1 domain. Histidine 41 provides a ligand contact to Zn(2+). A disulfide bridge connects residues cysteine 57 and cysteine 73. The active-site Charge relay system is the histidine 72. Glutamate 92 contacts Zn(2+). Residue aspartate 117 is the Charge relay system of the active site. Asparagine 124 and asparagine 170 each carry an N-linked (GlcNAc...) asparagine glycan. Disulfide bonds link cysteine 149/cysteine 214, cysteine 179/cysteine 193, and cysteine 204/cysteine 229. Serine 208 acts as the Charge relay system in catalysis.

It belongs to the peptidase S1 family. Kallikrein subfamily. In terms of processing, N-glycosylated. The N-glycan structures are of complex diantennary or triantennary type, which may be further modified with up to 2 sialic acid residues.

Its subcellular location is the secreted. Has a major role in enamel formation. Required during the maturation stage of tooth development for clearance of enamel proteins and normal structural patterning of the crystalline matrix. This chain is Kallikrein-4, found in Mus musculus (Mouse).